The following is a 459-amino-acid chain: E3 ubiquitin-protein ligase RNF25 (459 aa).

Residues 18–128 (SEVEVLESIY…EKGKEILTDN (111 aa)) enclose the RWD domain. Residues cysteine 135, cysteine 138, cysteine 153, histidine 155, histidine 158, cysteine 161, cysteine 198, and cysteine 201 each coordinate Zn(2+). The segment at 135–202 (CVICLYGFQE…AVGVQCPVCR (68 aa)) adopts an RING-type zinc-finger fold. Disordered regions lie at residues 268-309 (PPAP…PPLP) and 322-459 (TRSN…KDGS). Polar residues predominate over residues 282–303 (KGSQPPSTLAAELSTSPAVQST). 4 stretches are compositionally biased toward basic and acidic residues: residues 349-370 (QPER…RDTQ), 378-389 (PLKEPMDLKPEP), 413-424 (RTRDCVRWERSK), and 446-459 (TRRE…KDGS). Serine 450 is modified (phosphoserine).

The protein belongs to the RNF25 family. As to quaternary structure, interacts with UBE2D2, and may also interact with UBE2E1 and UBE2E3. Interacts with RELA/p65. In terms of processing, ubiquitinated; autoubiquitinated.

It is found in the cytoplasm. The catalysed reaction is S-ubiquitinyl-[E2 ubiquitin-conjugating enzyme]-L-cysteine + [acceptor protein]-L-lysine = [E2 ubiquitin-conjugating enzyme]-L-cysteine + N(6)-ubiquitinyl-[acceptor protein]-L-lysine.. It participates in protein modification; protein ubiquitination. Its function is as follows. E3 ubiquitin-protein ligase that plays a key role in the RNF14-RNF25 translation quality control pathway, a pathway that takes place when a ribosome has stalled during translation, and which promotes ubiquitination and degradation of translation factors on stalled ribosomes. Catalyzes ubiquitination of RPS27A in response to ribosome collisions, promoting activation of RNF14. RNF25 catalyzes ubiquitination of other ribosomal proteins on stalled ribosomes, such as RPL0, RPL1, RPL12, RPS13 and RPS17. Also involved in ubiquitination and degradation of stalled ETF1/eRF1. Independently of its function in the response to stalled ribosomes, mediates ubiquitination and subsequent proteasomal degradation of NKD2. May also stimulate transcription mediated by NF-kappa-B via its interaction with RELA/p65. This Homo sapiens (Human) protein is E3 ubiquitin-protein ligase RNF25.